Here is a 162-residue protein sequence, read N- to C-terminus: MLKITLIAACAENLCIGAGNAMPWHIPEDFAFFKAYTLGKPVIMGRKTWESLPVKPLPGRRNIVISRQADYCAAGAETAASLEAALALCAGAEEAVIMGGAQIYGQAMPLATDLRITEVDLSVEGDAFFPAIDRTHWKEAERTERRVSSKGTSYAFVHYLRY.

A DHFR domain is found at 3-161; the sequence is KITLIAACAE…TSYAFVHYLR (159 aa). Substrate is bound at residue 7–9; the sequence is IAA. NADP(+) contacts are provided by residues 8–9 and 16–21; these read AA and IGAGNA. D29 provides a ligand contact to substrate. NADP(+) is bound at residue 45–48; it reads GRKT. R60 is a substrate binding site. Residues 65-68 and 98-103 contribute to the NADP(+) site; these read ISRQ and MGGAQI. T117 is a binding site for substrate.

It belongs to the dihydrofolate reductase family.

It carries out the reaction (6S)-5,6,7,8-tetrahydrofolate + NADP(+) = 7,8-dihydrofolate + NADPH + H(+). The protein operates within cofactor biosynthesis; tetrahydrofolate biosynthesis; 5,6,7,8-tetrahydrofolate from 7,8-dihydrofolate: step 1/1. In terms of biological role, key enzyme in folate metabolism. Catalyzes an essential reaction for de novo glycine and purine synthesis, and for DNA precursor synthesis. The protein is Dihydrofolate reductase (folA) of Neisseria meningitidis serogroup A / serotype 4A (strain DSM 15465 / Z2491).